Consider the following 95-residue polypeptide: MVGKNMSKSLTLKNPGRVAYDSGGIKMFWEKKIEHHARHLQNEDIRVRRSALNKLRVGWAEQLEGRNKMLQGPGRCPDRVPEATESLHTKDKKAA.

Residues 68–95 are disordered; sequence KMLQGPGRCPDRVPEATESLHTKDKKAA. The span at 76–95 shows a compositional bias: basic and acidic residues; sequence CPDRVPEATESLHTKDKKAA.

The protein belongs to the FAM240 family.

In Homo sapiens (Human), this protein is Protein FAM240C (FAM240C).